A 396-amino-acid polypeptide reads, in one-letter code: Acyl-[acyl-carrier-protein] desaturase, chloroplastic (396 aa).

The N-terminal 33 residues, 1–33, are a transit peptide targeting the chloroplast; sequence MALKFHPLTSQSPKLPSFRMPQLASLRSPKFVM. 6 residues coordinate Fe cation: Glu138, Glu176, His179, Glu229, Glu262, and His265.

This sequence belongs to the fatty acid desaturase type 2 family. As to quaternary structure, homodimer. Fe(2+) serves as cofactor.

It is found in the plastid. Its subcellular location is the chloroplast. It functions in the pathway lipid metabolism; fatty acid metabolism. Functionally, introduces a cis double bond in the acyl chain of an acyl-[acyl-carrier protein]. The polypeptide is Acyl-[acyl-carrier-protein] desaturase, chloroplastic (Cucumis sativus (Cucumber)).